The primary structure comprises 201 residues: Recombination protein RecR (201 aa).

Residues 57–72 form a C4-type zinc finger; that stretch reads CADCRTFTEQEICTIC. Residues 81 to 176 enclose the Toprim domain; that stretch reads GLICVVESPA…DASRIAHGVP (96 aa).

It belongs to the RecR family.

May play a role in DNA repair. It seems to be involved in an RecBC-independent recombinational process of DNA repair. It may act with RecF and RecO. The sequence is that of Recombination protein RecR from Erwinia tasmaniensis (strain DSM 17950 / CFBP 7177 / CIP 109463 / NCPPB 4357 / Et1/99).